A 2701-amino-acid polypeptide reads, in one-letter code: Centromere-associated protein E (2701 aa).

One can recognise a Kinesin motor domain in the interval 6–329; sequence AVAVCVRVRP…LQFASTAKYM (324 aa). 86–93 is an ATP binding site; that stretch reads GQTASGKT. The stretch at 336 to 2590 forms a coiled coil; it reads NEVSTDEALL…SNEVKTWKER (2255 aa). A phosphoserine mark is found at Ser-611 and Ser-2083. The tract at residues 2126–2476 is kinetochore-binding domain; sequence KEIEFQKELS…IDLEKMKNAK (351 aa). A disordered region spans residues 2355–2376; the sequence is SGAQVNPTTQDNKNPHVTSRAT. Ser-2389 bears the Phosphoserine mark. Residues 2508–2527 show a composition bias toward polar residues; that stretch reads QAQDTSVISEHTDPQPSNKP. 2 disordered regions span residues 2508–2533 and 2588–2701; these read QAQD…CGGG and KERT…CKTQ. Positions 2510-2698 are globular autoinhibitory domain; it reads QDTSVISEHT…ASSGKDVPEC (189 aa). The span at 2588–2600 shows a compositional bias: basic and acidic residues; sequence KERTLKREAHKQV. The segment covering 2601 to 2625 has biased composition (polar residues); sequence TCENSPKSPKVTGTASKKKQITPSQ. Basic and acidic residues predominate over residues 2626–2640; sequence CKERNLQDPVPKESP. Ser-2639, Ser-2647, and Ser-2651 each carry phosphoserine. Cys-2698 is subject to Cysteine methyl ester. Residue Cys-2698 is the site of S-farnesyl cysteine attachment. The propeptide at 2699–2701 is removed in mature form; that stretch reads KTQ.

This sequence belongs to the TRAFAC class myosin-kinesin ATPase superfamily. Kinesin family. As to quaternary structure, monomer. Interacts with CENPF. Interacts with BUB1B. Interacts with SEPT7. Interacts with KIF18A. Interacts with PRC1. Interacts with NUF2; this interaction determines kinetochore localization. Interacts with SKAP; this interaction greatly favors SKAP binding to microtubules. Interacts with TRAPPC12. Interacts with CTCF. Post-translationally, the C-terminal inhibitory domain is phosphorylated. Phosphorylation relieves autoinhibition of the kinetochore motor. In terms of processing, sumoylated with SUMO2 and SUMO3. The sumoylation mediates the association to the kinetochore.

The protein resides in the chromosome. It localises to the centromere. Its subcellular location is the kinetochore. The protein localises to the cytoplasm. It is found in the cytoskeleton. The protein resides in the spindle. Its function is as follows. Microtubule plus-end-directed kinetochore motor which plays an important role in chromosome congression, microtubule-kinetochore conjugation and spindle assembly checkpoint activation. Drives chromosome congression (alignment of chromosomes at the spindle equator resulting in the formation of the metaphase plate) by mediating the lateral sliding of polar chromosomes along spindle microtubules towards the spindle equator and by aiding the establishment and maintenance of connections between kinetochores and spindle microtubules. The transport of pole-proximal chromosomes towards the spindle equator is favored by microtubule tracks that are detyrosinated. Acts as a processive bi-directional tracker of dynamic microtubule tips; after chromosomes have congressed, continues to play an active role at kinetochores, enhancing their links with dynamic microtubule ends. Suppresses chromosome congression in NDC80-depleted cells and contributes positively to congression only when microtubules are stabilized. Plays an important role in the formation of stable attachments between kinetochores and spindle microtubules The stabilization of kinetochore-microtubule attachment also requires CENPE-dependent localization of other proteins to the kinetochore including BUB1B, MAD1 and MAD2. Plays a role in spindle assembly checkpoint activation (SAC) via its interaction with BUB1B resulting in the activation of its kinase activity, which is important for activating SAC. Necessary for the mitotic checkpoint signal at individual kinetochores to prevent aneuploidy due to single chromosome loss. The chain is Centromere-associated protein E (CENPE) from Homo sapiens (Human).